The primary structure comprises 275 residues: MSKQTQTTRKTVKDIAAAKGATPLVMLTAYDAPTAAILDPHCDILLVGDSLGMVVHGLPSTVGVTMEMMILHGQAVMRGASQAMVVVDMPFGSYETNADQAFLNAVRIMKETGCQAIKIESGAYAAGQIAHLVERGIPVMGHIGLRPQAINVDGGFRAKGRTEDERDRVIAEARAAADAGAFCIVIEGVAEDLAAAITAEVSCPTIGIGASAACDGQVLVTQDMLGLFDWTPKFVRRYADLREVVDKAAAEYAADVRARRFPGTAETYSLRKQGS.

Mg(2+) contacts are provided by D49 and D88. Residues 49 to 50 (DS), D88, and K118 contribute to the 3-methyl-2-oxobutanoate site. E120 contacts Mg(2+). E187 (proton acceptor) is an active-site residue.

Belongs to the PanB family. As to quaternary structure, homodecamer; pentamer of dimers. Requires Mg(2+) as cofactor.

The protein resides in the cytoplasm. It carries out the reaction 3-methyl-2-oxobutanoate + (6R)-5,10-methylene-5,6,7,8-tetrahydrofolate + H2O = 2-dehydropantoate + (6S)-5,6,7,8-tetrahydrofolate. The protein operates within cofactor biosynthesis; (R)-pantothenate biosynthesis; (R)-pantoate from 3-methyl-2-oxobutanoate: step 1/2. Catalyzes the reversible reaction in which hydroxymethyl group from 5,10-methylenetetrahydrofolate is transferred onto alpha-ketoisovalerate to form ketopantoate. This Hyphomonas neptunium (strain ATCC 15444) protein is 3-methyl-2-oxobutanoate hydroxymethyltransferase.